Here is an 876-residue protein sequence, read N- to C-terminus: MIKSTAEVRQAFLDFFATKQHQIVKSSSLVPGNDATLLFTNAGMVPFKDVFLGAETRSYTRATSAQRCVRAGGKHNDLENVGYTARHHTFFEMMGNFSFGDYFKNDAISYAWEFLTGELGLAKEKLLVTVYATDEEAFSYWRDEVGVPEDKIIRIGDKSANKKYESDNFWSMGDTGPCGPCSEIFYDHGEDIFGGPPGSPDEDGDRFIEIWNIVFMQFNRQSDGRMDPLPNPSIDTGMGLERISAIMQNVHSNYEIDIFQALIKDTAALLDCSDLEHKSLRVIGDHIRSCSFLIVDGVVPSNEGRGYVLRRIIRRAIRHGHKLEATGHFFHKLVASLIAQMGEAYPELAQQQAIIEKLLRIEEEQFGRTLDRGMILLEDILANLSGDIIKGDDVFKLYDTYGFPADLTADIARERNLKIDKDGFDVAMKQQRERAQQASQFGTDYNQQLKSDQNTAFKGYDNDSYSATVVELFNSQDQDPVSQLNSGEQGIVILDHTPFYAESGGQVGDSGLLHLDGGVFEVTDTIKLGNAFAHRGTAHTDVGLNRRVKAEINVERRAAIVKNHTATHLLHEALRKVLGEHVTQKGSLCDSDKLRFDFSHFEGVTAQELHDVEQMVNNEIRRNHAKQTESMYIEEAKAKGAMALFGEKYDDEVRVVTLGDFSIELCGGVHVNRTGDIGFLKIVSESGIAAGVRRIEAVTGTGALDFINQQTASLTTIAALVKSDVTNASSKVELLISRSKQLEKEIGQLKQELAAQAGSDLVNNTIEINGVKVLIADLGSVESKALRGMVDELKNKMQSGVIMLATANGPKVGLIAGVTKDLVGRVKAGDLVNMVAQQVGGKGGGRPDMAQAGGSQPENITSALESVSAWLTEKLA.

Positions 564, 568, 666, and 670 each coordinate Zn(2+).

The protein belongs to the class-II aminoacyl-tRNA synthetase family. The cofactor is Zn(2+).

The protein localises to the cytoplasm. It catalyses the reaction tRNA(Ala) + L-alanine + ATP = L-alanyl-tRNA(Ala) + AMP + diphosphate. Catalyzes the attachment of alanine to tRNA(Ala) in a two-step reaction: alanine is first activated by ATP to form Ala-AMP and then transferred to the acceptor end of tRNA(Ala). Also edits incorrectly charged Ser-tRNA(Ala) and Gly-tRNA(Ala) via its editing domain. This Colwellia psychrerythraea (strain 34H / ATCC BAA-681) (Vibrio psychroerythus) protein is Alanine--tRNA ligase.